The sequence spans 287 residues: uncharacterized protein (287 aa).

Transmembrane regions (helical) follow at residues 27 to 47, 66 to 86, 97 to 117, 135 to 155, 171 to 191, 205 to 225, and 254 to 274; these read LTFS…FGVQ, LGTI…VTAF, WFWG…GVLL, IVFA…LSAL, IFIW…VLNF, LFPG…VYFV, and SALF…YFIL.

Its subcellular location is the cell membrane. This is an uncharacterized protein from Mycoplasma pneumoniae (strain ATCC 29342 / M129 / Subtype 1) (Mycoplasmoides pneumoniae).